Consider the following 156-residue polypeptide: Small ribosomal subunit protein uS7 (156 aa).

Belongs to the universal ribosomal protein uS7 family. As to quaternary structure, part of the 30S ribosomal subunit. Contacts proteins S9 and S11.

In terms of biological role, one of the primary rRNA binding proteins, it binds directly to 16S rRNA where it nucleates assembly of the head domain of the 30S subunit. Is located at the subunit interface close to the decoding center, probably blocks exit of the E-site tRNA. The protein is Small ribosomal subunit protein uS7 of Novosphingobium aromaticivorans (strain ATCC 700278 / DSM 12444 / CCUG 56034 / CIP 105152 / NBRC 16084 / F199).